Reading from the N-terminus, the 445-residue chain is Clusterin (445 aa).

Residues 1–22 (MMKTLLLLVGLLLTWDNGRVLG) form the signal peptide. A Nuclear localization signal motif is present at residues 78-81 (KKKK). Residues N86 and N103 are each glycosylated (N-linked (GlcNAc...) asparagine). 5 cysteine pairs are disulfide-bonded: C102–C309, C113–C301, C116–C298, C121–C291, and C129–C281. S133 bears the Phosphoserine mark. N-linked (GlcNAc...) asparagine glycans are attached at residues N145, N277, N287, N350, and N370. S392 is subject to Phosphoserine. The Nuclear localization signal signature appears at 439-443 (RQKHR).

It belongs to the clusterin family. As to quaternary structure, antiparallel disulfide-linked heterodimer of an alpha chain and a beta chain. Self-associates and forms higher oligomers. Interacts with a broad range of misfolded proteins, including APP, APOC2 and LYZ. Slightly acidic pH promotes interaction with misfolded proteins. Forms high-molecular weight oligomers upon interaction with misfolded proteins. Interacts with APOA1, LRP2, CLUAP1 and PON1. Interacts with the complement membrane attack complex. Interacts (via alpha chain) with XRCC6. Interacts with SYVN1, COMMD1, BTRC, CUL1 and with ubiquitin and SCF (SKP1-CUL1-F-box protein) E3 ubiquitin-protein ligase complexes. Interacts (via alpha chain) with BAX in stressed cells, where BAX undergoes a conformation change leading to association with the mitochondrial membrane. Does not interact with BAX in unstressed cells. Found in a complex with LTF, CLU, EPPIN and SEMG1. Interacts (immaturely glycosylated pre-secreted form) with HSPA5; this interaction promotes CLU stability and facilitates stress-induced CLU retrotranslocation from the secretory pathway to the mitochondria, thereby reducing stress-induced apoptosis by stabilizing mitochondrial membrane integrity. Interacts with BCL2L1; this interaction releases and activates BAX and promotes cell death. Interacts with TGFBR2 and ACVR1. Interacts (secreted form) with STMN3; this interaction may act as an important modulator during neuronal differentiation. Interacts with VLDLR and LRP8. In terms of processing, proteolytically cleaved on its way through the secretory system, probably within the Golgi lumen. Proteolytic cleavage is not necessary for its chaperone activity. All non-secreted forms are not proteolytically cleaved. Chaperone activity of uncleaved forms is dependent on a non-reducing environment. This proteolytic maturation is disulfide bond formation dependent. Post-translationally, polyubiquitinated, leading to proteasomal degradation. Under cellular stress, the intracellular level of cleaved form is reduced due to proteasomal degradation. Heavily N-glycosylated. About 30% of the protein mass is comprised of complex N-linked carbohydrate. Endoplasmic reticulum (ER) stress induces changes in glycosylation status and increases level of hypoglycosylated forms. Core carbohydrates are essential for chaperone activity. Non-secreted forms are hypoglycosylated or unglycosylated.

The protein localises to the secreted. Its subcellular location is the nucleus. It localises to the cytoplasm. It is found in the mitochondrion membrane. The protein resides in the cytosol. The protein localises to the microsome. Its subcellular location is the endoplasmic reticulum. It localises to the mitochondrion. It is found in the perinuclear region. The protein resides in the cytoplasmic vesicle. The protein localises to the secretory vesicle. Its subcellular location is the chromaffin granule. Its function is as follows. Functions as extracellular chaperone that prevents aggregation of non native proteins. Prevents stress-induced aggregation of blood plasma proteins. Inhibits formation of amyloid fibrils by APP, APOC2, B2M, CALCA, CSN3, SNCA and aggregation-prone LYZ variants (in vitro). Does not require ATP. Maintains partially unfolded proteins in a state appropriate for subsequent refolding by other chaperones, such as HSPA8/HSC70. Does not refold proteins by itself. Binding to cell surface receptors triggers internalization of the chaperone-client complex and subsequent lysosomal or proteasomal degradation. When secreted, protects cells against apoptosis and against cytolysis by complement: inhibits assembly of the complement membrane attack complex (MAC) by preventing polymerization of C9 pore component of the MAC complex. Intracellular forms interact with ubiquitin and SCF (SKP1-CUL1-F-box protein) E3 ubiquitin-protein ligase complexes and promote the ubiquitination and subsequent proteasomal degradation of target proteins. Promotes proteasomal degradation of COMMD1 and IKBKB. Modulates NF-kappa-B transcriptional activity. Following stress, promotes apoptosis. Inhibits apoptosis when associated with the mitochondrial membrane by interference with BAX-dependent release of cytochrome c into the cytoplasm. Plays a role in the regulation of cell proliferation. An intracellular form suppresses stress-induced apoptosis by stabilizing mitochondrial membrane integrity through interaction with HSPA5. Secreted form does not affect caspase or BAX-mediated intrinsic apoptosis and TNF-induced NF-kappa-B-activity. Secreted form act as an important modulator during neuronal differentiation through interaction with STMN3. Plays a role in the clearance of immune complexes that arise during cell injury. This is Clusterin (CLU) from Canis lupus familiaris (Dog).